Here is an 80-residue protein sequence, read N- to C-terminus: Large ribosomal subunit protein bL31 (80 aa).

The protein belongs to the bacterial ribosomal protein bL31 family. Type A subfamily. Part of the 50S ribosomal subunit.

In terms of biological role, binds the 23S rRNA. This is Large ribosomal subunit protein bL31 from Nostoc punctiforme (strain ATCC 29133 / PCC 73102).